The chain runs to 191 residues: uncharacterized protein (191 aa).

Transmembrane regions (helical) follow at residues 24–44 (IVRG…GASG), 51–71 (IIAA…LGAF), 114–134 (LIDG…FFLF), 139–159 (ALYV…VFIG), and 167–187 (IISG…CFMI).

It localises to the cell membrane. This is an uncharacterized protein from Methanocaldococcus jannaschii (strain ATCC 43067 / DSM 2661 / JAL-1 / JCM 10045 / NBRC 100440) (Methanococcus jannaschii).